Reading from the N-terminus, the 129-residue chain is Large ribosomal subunit protein bL12c (129 aa).

It belongs to the bacterial ribosomal protein bL12 family. In terms of assembly, homodimer. Part of the ribosomal stalk of the 50S ribosomal subunit. Forms a multimeric L10(L12)X complex, where L10 forms an elongated spine to which 2 to 4 L12 dimers bind in a sequential fashion. Binds GTP-bound translation factors.

Its subcellular location is the plastid. The protein resides in the chloroplast. Its function is as follows. Forms part of the ribosomal stalk which helps the ribosome interact with GTP-bound translation factors. Is thus essential for accurate translation. This is Large ribosomal subunit protein bL12c from Porphyra purpurea (Red seaweed).